The primary structure comprises 138 residues: Large ribosomal subunit protein uL16 (138 aa).

Over residues 1-19 (MLIPKRVKYRRQHRPHRSG) the composition is skewed to basic residues. The interval 1 to 24 (MLIPKRVKYRRQHRPHRSGVSKGG) is disordered.

This sequence belongs to the universal ribosomal protein uL16 family. As to quaternary structure, part of the 50S ribosomal subunit.

Its function is as follows. Binds 23S rRNA and is also seen to make contacts with the A and possibly P site tRNAs. The polypeptide is Large ribosomal subunit protein uL16 (Corynebacterium diphtheriae (strain ATCC 700971 / NCTC 13129 / Biotype gravis)).